A 258-amino-acid chain; its full sequence is DNA repair protein RecO (258 aa).

Belongs to the RecO family.

Involved in DNA repair and RecF pathway recombination. The sequence is that of DNA repair protein RecO from Oceanobacillus iheyensis (strain DSM 14371 / CIP 107618 / JCM 11309 / KCTC 3954 / HTE831).